We begin with the raw amino-acid sequence, 264 residues long: Glutamate racemase (264 aa).

Substrate contacts are provided by residues 11–12 (DS) and 43–44 (YG). Residue cysteine 74 is the Proton donor/acceptor of the active site. 75–76 (NT) contacts substrate. Cysteine 193 functions as the Proton donor/acceptor in the catalytic mechanism. 194–195 (TH) contributes to the substrate binding site.

The protein belongs to the aspartate/glutamate racemases family.

It carries out the reaction L-glutamate = D-glutamate. It functions in the pathway cell wall biogenesis; peptidoglycan biosynthesis. Its function is as follows. Provides the (R)-glutamate required for cell wall biosynthesis. This is Glutamate racemase from Bifidobacterium longum subsp. infantis (strain ATCC 15697 / DSM 20088 / JCM 1222 / NCTC 11817 / S12).